The chain runs to 514 residues: MYRIVATASALIAAARAQQVCSLNTETKPALTWSKCTSSGCSDVKGSVVIDANWRWTHQTSGSTNCYTGNKWDTSICTDGKTCAEKCCLDGADYSGTYGITSSGNQLSLGFVTNGPYSKNIGSRTYLMENENTYQMFQLLGNEFTFDVDVSGIGCGLNGAPHFVSMDEDGGKAKYSGNKAGAKYGTGYCDAQCPRDVKFINGVANSEGWKPSDSDVNAGVGNLGTCCPEMDIWEANSISTAFTPHPCTKLTQHSCTGDSCGGTYSSDRYGGTCDADGCDFNAYRQGNKTFYGPGSNFNIDTTKKMTVVTQFHKGSNGRLSEITRLYVQNGKVIANSESKIAGNPGSSLTSDFCSKQKSVFGDIDDFSKKGGWNGMSDALSAPMVLVMSLWHDHHSNMLWLDSTYPTDSTKVGSQRGSCATTSGKPSDLERDVPNSKVSFSNIKFGPIGSTYKSDGTTPNPPASSSTTGSSTPTNPPAGSVDQWGQCGGQNYSGPTTCKSPFTCKKINDFYSQCQ.

Residues 1 to 17 (MYRIVATASALIAAARA) form the signal peptide. The interval 18–439 (QQVCSLNTET…RDVPNSKVSF (422 aa)) is catalytic. The Nucleophile role is filled by glutamate 229. The active-site Proton donor is glutamate 234. Asparagine 287 carries an N-linked (GlcNAc...) asparagine glycan. Positions 408–424 (STKVGSQRGSCATTSGK) are enriched in polar residues. 2 disordered regions span residues 408 to 433 (STKV…RDVP) and 448 to 485 (GSTY…QWGQ). The interval 440 to 482 (SNIKFGPIGSTYKSDGTTPNPPASSSTTGSSTPTNPPAGSVDQ) is linker. The span at 462–479 (ASSSTTGSSTPTNPPAGS) shows a compositional bias: low complexity. Positions 478-514 (GSVDQWGQCGGQNYSGPTTCKSPFTCKKINDFYSQCQ) constitute a CBM1 domain. Disulfide bonds link cysteine 486–cysteine 503 and cysteine 497–cysteine 513. Residue asparagine 490 is glycosylated (N-linked (GlcNAc...) asparagine).

It belongs to the glycosyl hydrolase 7 (cellulase C) family.

The enzyme catalyses Hydrolysis of (1-&gt;4)-beta-D-glucosidic linkages in cellulose and cellotetraose, releasing cellobiose from the non-reducing ends of the chains.. The protein is Putative exoglucanase type C of Fusarium oxysporum (Fusarium vascular wilt).